Consider the following 713-residue polypeptide: Ribosomal RNA large subunit methyltransferase K/L (713 aa).

In terms of domain architecture, THUMP spans Leu43–Phe154.

The protein belongs to the methyltransferase superfamily. RlmKL family.

The protein resides in the cytoplasm. It carries out the reaction guanosine(2445) in 23S rRNA + S-adenosyl-L-methionine = N(2)-methylguanosine(2445) in 23S rRNA + S-adenosyl-L-homocysteine + H(+). The catalysed reaction is guanosine(2069) in 23S rRNA + S-adenosyl-L-methionine = N(2)-methylguanosine(2069) in 23S rRNA + S-adenosyl-L-homocysteine + H(+). Functionally, specifically methylates the guanine in position 2445 (m2G2445) and the guanine in position 2069 (m7G2069) of 23S rRNA. The protein is Ribosomal RNA large subunit methyltransferase K/L of Shewanella sp. (strain ANA-3).